A 380-amino-acid polypeptide reads, in one-letter code: WAT1-related protein At2g37460 (380 aa).

10 helical membrane-spanning segments follow: residues 16–36 (FISM…SKAV), 45–65 (VLVV…AFYF), 71–91 (PKMT…EPVI), 107–127 (FATA…YIFG), 142–162 (VVGT…KGPV), 187–207 (GAVL…LQAI), 216–236 (LSLT…VALV), 254–274 (LTAT…GGVV), 282–302 (FVTA…TIIF), and 306–326 (MYLG…LVIW). The EamA 1 domain maps to 27 to 134 (AGMDILSKAV…IFGLERVKLR (108 aa)). In terms of domain architecture, EamA 2 spans 196 to 325 (FSYACFMILQ…VICAGLYLVI (130 aa)).

Belongs to the drug/metabolite transporter (DMT) superfamily. Plant drug/metabolite exporter (P-DME) (TC 2.A.7.4) family.

The protein localises to the membrane. The polypeptide is WAT1-related protein At2g37460 (Arabidopsis thaliana (Mouse-ear cress)).